The following is a 364-amino-acid chain: Chorismate synthase (364 aa).

Residue Arg48 participates in NADP(+) binding. FMN contacts are provided by residues 131–133 (RSS), 243–244 (NA), Gly288, 303–307 (KPTSS), and Arg329.

The protein belongs to the chorismate synthase family. Homotetramer. It depends on FMNH2 as a cofactor.

The enzyme catalyses 5-O-(1-carboxyvinyl)-3-phosphoshikimate = chorismate + phosphate. Its pathway is metabolic intermediate biosynthesis; chorismate biosynthesis; chorismate from D-erythrose 4-phosphate and phosphoenolpyruvate: step 7/7. In terms of biological role, catalyzes the anti-1,4-elimination of the C-3 phosphate and the C-6 proR hydrogen from 5-enolpyruvylshikimate-3-phosphate (EPSP) to yield chorismate, which is the branch point compound that serves as the starting substrate for the three terminal pathways of aromatic amino acid biosynthesis. This reaction introduces a second double bond into the aromatic ring system. The protein is Chorismate synthase of Brucella anthropi (strain ATCC 49188 / DSM 6882 / CCUG 24695 / JCM 21032 / LMG 3331 / NBRC 15819 / NCTC 12168 / Alc 37) (Ochrobactrum anthropi).